The following is a 1332-amino-acid chain: DNA-directed RNA polymerase subunit beta' (1332 aa).

Residues C60, C62, C75, and C78 each contribute to the Zn(2+) site. D535, D537, and D539 together coordinate Mg(2+). C894, C977, C984, and C987 together coordinate Zn(2+).

It belongs to the RNA polymerase beta' chain family. The RNAP catalytic core consists of 2 alpha, 1 beta, 1 beta' and 1 omega subunit. When a sigma factor is associated with the core the holoenzyme is formed, which can initiate transcription. Requires Mg(2+) as cofactor. The cofactor is Zn(2+).

The enzyme catalyses RNA(n) + a ribonucleoside 5'-triphosphate = RNA(n+1) + diphosphate. In terms of biological role, DNA-dependent RNA polymerase catalyzes the transcription of DNA into RNA using the four ribonucleoside triphosphates as substrates. The sequence is that of DNA-directed RNA polymerase subunit beta' from Corynebacterium kroppenstedtii (strain DSM 44385 / JCM 11950 / CIP 105744 / CCUG 35717).